A 186-amino-acid polypeptide reads, in one-letter code: Mitoferrin-2B (186 aa).

Residues 75–163 (SNVTAHMLAG…FACYEKLKKT (89 aa)) form a Solcar repeat. 3 helical membrane passes run 77–96 (VTAHMLAGAVAGVMEHCLMY), 137–157 (RGLNVTATGAGPAHALYFACY), and 172–185 (GNCHVANGIDNSCP).

This sequence belongs to the mitochondrial carrier (TC 2.A.29) family.

It is found in the mitochondrion inner membrane. It catalyses the reaction Fe(2+)(in) = Fe(2+)(out). Mitochondrial iron transporter that mediates iron uptake. Probably required for heme synthesis of hemoproteins and Fe-S cluster assembly in non-erythroid cells. The protein is Mitoferrin-2B (slc25a28-b) of Xenopus laevis (African clawed frog).